The primary structure comprises 241 residues: Uridylate kinase (241 aa).

15–18 is a binding site for ATP; the sequence is KLSG. The interval 23–28 is involved in allosteric activation by GTP; it reads GTEGFG. Gly-57 provides a ligand contact to UMP. Positions 58 and 62 each coordinate ATP. Residues Asp-77 and 138-145 each bind UMP; that span reads TGNPFFTT. The ATP site is built by Thr-165, Phe-171, and Asp-174.

This sequence belongs to the UMP kinase family. In terms of assembly, homohexamer.

Its subcellular location is the cytoplasm. It catalyses the reaction UMP + ATP = UDP + ADP. The protein operates within pyrimidine metabolism; CTP biosynthesis via de novo pathway; UDP from UMP (UMPK route): step 1/1. With respect to regulation, allosterically activated by GTP. Inhibited by UTP. Catalyzes the reversible phosphorylation of UMP to UDP. This Salmonella choleraesuis (strain SC-B67) protein is Uridylate kinase.